Consider the following 186-residue polypeptide: Elongation factor P (186 aa).

The protein belongs to the elongation factor P family.

The protein localises to the cytoplasm. Its pathway is protein biosynthesis; polypeptide chain elongation. Involved in peptide bond synthesis. Stimulates efficient translation and peptide-bond synthesis on native or reconstituted 70S ribosomes in vitro. Probably functions indirectly by altering the affinity of the ribosome for aminoacyl-tRNA, thus increasing their reactivity as acceptors for peptidyl transferase. This chain is Elongation factor P, found in Prochlorococcus marinus (strain MIT 9515).